A 943-amino-acid chain; its full sequence is Isoleucine--tRNA ligase (943 aa).

A 'HIGH' region motif is present at residues 59 to 69 (PYANGQIHLGH). Glu-577 is a binding site for L-isoleucyl-5'-AMP. The 'KMSKS' region signature appears at 618 to 622 (KMSKS). Position 621 (Lys-621) interacts with ATP. Residues Cys-906, Cys-909, Cys-926, and Cys-929 each coordinate Zn(2+).

This sequence belongs to the class-I aminoacyl-tRNA synthetase family. IleS type 1 subfamily. As to quaternary structure, monomer. It depends on Zn(2+) as a cofactor.

Its subcellular location is the cytoplasm. The catalysed reaction is tRNA(Ile) + L-isoleucine + ATP = L-isoleucyl-tRNA(Ile) + AMP + diphosphate. Its function is as follows. Catalyzes the attachment of isoleucine to tRNA(Ile). As IleRS can inadvertently accommodate and process structurally similar amino acids such as valine, to avoid such errors it has two additional distinct tRNA(Ile)-dependent editing activities. One activity is designated as 'pretransfer' editing and involves the hydrolysis of activated Val-AMP. The other activity is designated 'posttransfer' editing and involves deacylation of mischarged Val-tRNA(Ile). The protein is Isoleucine--tRNA ligase of Xanthomonas campestris pv. campestris (strain 8004).